A 679-amino-acid polypeptide reads, in one-letter code: MAPFPDEVDVFTGPHWRMKQLVGLYSEKLSNTNFSNNRDFRSFLQSLLDTFTEFKKHEQIENECIMELLQERSHTVYHVHADNKLSDMLTLFQKGLRSVTSEFEQLNYAQQLKERLEAFTQDFIPHMKEEEEVYQPMLMEYFSYEELKAIKQQVMLQHCSSQCQSSCSDTHTLLKGLSLWSHAELQKAFKYSDHEKTGDERVLERVSVSSLPQELLLRIFRFLGPQDLCRCAQVCSVWTQVTRTGSLWRHLYPVRWARGEYYSGPPGDLDLEPDDDWIKSLQDDGRAYQEWDEDADVDESEEASAERSSISALQREKLLLNGIIQKLLPAVGSSVRSLSLAYSSTLSSKMVRQMLSLCPNLTHLDLTQTDVSDSAFDSWCALGACGTLQHLDLSGCDKITDRTLKILSVGLGDSSTPSPAHKLLQAPPSPIRIEEPRLQPMGRSCQDLIFKRRPGGRGSGCGPTHIWVLDPVKLADIEDAADWSRRGGVASQEIGCGGISEALSASCCCRRSQRRGFRTGLSSSPWQYGDALCGHSSCCSSDAAAIRTQSDLQATGGSAELRTKCWFEGQSCAEHHNRTDQSGAQRALRFLSLSGCHQITDLGLRCVCLRGGLPLLEHLNLSGCPLITGAGLQEVVSASPALNIEHFYYCDNINGPHADTASGCQNLQCGFRVCCRSGE.

The tract at residues 1-159 is hemerythrin-like; that stretch reads MAPFPDEVDV…IKQQVMLQHC (159 aa). Fe(3+) is bound by residues H15, H57, E58, E61, H80, H126, and E130. In terms of domain architecture, F-box spans 205–251; sequence RVSVSSLPQELLLRIFRFLGPQDLCRCAQVCSVWTQVTRTGSLWRHL. LRR repeat units follow at residues 316-342, 343-367, 368-395, 396-426, 565-595, 596-623, and 624-649; these read EKLLLNGIIQKLLPAVGSSVRSLSLAY, SSTLSSKMVRQMLSLCPNLTHLDLT, QTDVSDSAFDSWCALGACGTLQHLDLSG, CDKITDRTLKILSVGLGDSSTPSPAHKLLQA, CWFEGQSCAEHHNRTDQSGAQRALRFLSLSG, CHQITDLGLRCVCLRGGLPLLEHLNLSG, and CPLITGAGLQEVVSASPALNIEHFYY. 4 residues coordinate [2Fe-2S] cluster: C650, C664, C674, and C675.

As to quaternary structure, part of a SCF (SKP1-cullin-F-box) protein ligase complex. [2Fe-2S] cluster is required as a cofactor. In terms of processing, ubiquitinated upon iron and oxygen depletion, leading to its degradation by the proteasome. Ubiquitination is regulated by the hemerythrin-like region that acts as an oxygen and iron sensor.

The protein localises to the cytoplasm. Its subcellular location is the perinuclear region. It is found in the nucleus. The protein operates within protein modification; protein ubiquitination. Component of some SCF (SKP1-cullin-F-box) protein ligase complex that plays a central role in iron homeostasis by promoting the ubiquitination and subsequent degradation of ireb2/irp2. Upon high iron and oxygen level, it specifically recognizes and binds ireb2/irp2, promoting its ubiquitination and degradation by the proteasome. The protein is F-box/LRR-repeat protein 5 (fbxl5) of Danio rerio (Zebrafish).